The chain runs to 399 residues: S-adenosylmethionine synthase (399 aa).

H17 lines the ATP pocket. Mg(2+) is bound at residue D19. E45 lines the K(+) pocket. 2 residues coordinate L-methionine: E58 and Q101. Residues 101-111 (QSADIAMGVDQ) are flexible loop. Residues 177–179 (DGK), 244–245 (RF), D253, 259–260 (RK), A276, and K280 contribute to the ATP site. D253 serves as a coordination point for L-methionine. K284 provides a ligand contact to L-methionine.

The protein belongs to the AdoMet synthase family. As to quaternary structure, homotetramer; dimer of dimers. Requires Mg(2+) as cofactor. It depends on K(+) as a cofactor.

It is found in the cytoplasm. It catalyses the reaction L-methionine + ATP + H2O = S-adenosyl-L-methionine + phosphate + diphosphate. Its pathway is amino-acid biosynthesis; S-adenosyl-L-methionine biosynthesis; S-adenosyl-L-methionine from L-methionine: step 1/1. Its function is as follows. Catalyzes the formation of S-adenosylmethionine (AdoMet) from methionine and ATP. The overall synthetic reaction is composed of two sequential steps, AdoMet formation and the subsequent tripolyphosphate hydrolysis which occurs prior to release of AdoMet from the enzyme. This Bacillus cereus (strain G9842) protein is S-adenosylmethionine synthase.